Here is a 206-residue protein sequence, read N- to C-terminus: Large ribosomal subunit protein uL4 (206 aa).

The segment at 42-93 (KKQQGTHKTKNRSEVSRTGAKMYKQKGTGRARHHSARAPQFRGGGKAHGPVV) is disordered. Residues 64-77 (YKQKGTGRARHHSA) are compositionally biased toward basic residues.

It belongs to the universal ribosomal protein uL4 family. Part of the 50S ribosomal subunit.

Functionally, one of the primary rRNA binding proteins, this protein initially binds near the 5'-end of the 23S rRNA. It is important during the early stages of 50S assembly. It makes multiple contacts with different domains of the 23S rRNA in the assembled 50S subunit and ribosome. Its function is as follows. Forms part of the polypeptide exit tunnel. The polypeptide is Large ribosomal subunit protein uL4 (Agrobacterium fabrum (strain C58 / ATCC 33970) (Agrobacterium tumefaciens (strain C58))).